The primary structure comprises 439 residues: C4-dicarboxylate transport protein (439 aa).

Transmembrane regions (helical) follow at residues 9 to 29, 45 to 65, 80 to 100, 150 to 170, 186 to 206, 221 to 241, 291 to 311, 334 to 354, and 357 to 377; these read HLYF…YYMP, MIKM…IAGM, LYFE…INVI, GEIL…SAMG, AFFG…FGAM, LGML…VVLG, VVGL…SIYL, ILGV…SGFV, and AATF…ILGI.

This sequence belongs to the dicarboxylate/amino acid:cation symporter (DAACS) (TC 2.A.23) family.

The protein localises to the cell inner membrane. Its function is as follows. Responsible for the transport of dicarboxylates such as succinate, fumarate, and malate from the periplasm across the membrane. This Citrifermentans bemidjiense (strain ATCC BAA-1014 / DSM 16622 / JCM 12645 / Bem) (Geobacter bemidjiensis) protein is C4-dicarboxylate transport protein.